The primary structure comprises 297 residues: MHKRLKIYSVITSIGVLIVLLQGALVTKTGSGEGCGATWPLCFGEVIPTNPAIETIIEYSHRIVSGLVGAMIIILAIWAWKQLKHMREAKALSFAAVILIIFQGLLGAGAVVFGQSKAILALHFGISAMSLAAVVLLTILAFEDGREHTMAPKVSRGFKYYVFFVITYCYAVIYSGAYVKHSEATLACAGFPLCNGQIFPGLYGPVGAHYFHRVVGTILLLFLLILMIWTLSRYRHYRVLTWTAVLSFLLVVGQFISGISIVFTQNALSVGLIHALIISILFSALSYMTMIITRPSH.

Over 1–6 the chain is Cytoplasmic; the sequence is MHKRLK. A helical membrane pass occupies residues 7-27; it reads IYSVITSIGVLIVLLQGALVT. Residues 28 to 62 lie on the Extracellular side of the membrane; sequence KTGSGEGCGATWPLCFGEVIPTNPAIETIIEYSHR. A disulfide bridge links C35 with C42. E58 is a catalytic residue. H61 is a heme o binding site. The chain crosses the membrane as a helical span at residues 63-83; the sequence is IVSGLVGAMIIILAIWAWKQL. Topologically, residues 84 to 93 are cytoplasmic; it reads KHMREAKALS. Residues 94–114 form a helical membrane-spanning segment; sequence FAAVILIIFQGLLGAGAVVFG. Residues 115–118 lie on the Extracellular side of the membrane; the sequence is QSKA. A helical transmembrane segment spans residues 119–139; that stretch reads ILALHFGISAMSLAAVVLLTI. A heme o-binding site is contributed by H123. At 140 to 156 the chain is on the cytoplasmic side; sequence LAFEDGREHTMAPKVSR. A helical transmembrane segment spans residues 157–177; the sequence is GFKYYVFFVITYCYAVIYSGA. The Extracellular portion of the chain corresponds to 178 to 210; that stretch reads YVKHSEATLACAGFPLCNGQIFPGLYGPVGAHY. C188 and C194 are oxidised to a cystine. Residues 211–231 traverse the membrane as a helical segment; the sequence is FHRVVGTILLLFLLILMIWTL. H212 contributes to the heme b binding site. Topologically, residues 232 to 242 are cytoplasmic; the sequence is SRYRHYRVLTW. Residues 243–263 form a helical membrane-spanning segment; that stretch reads TAVLSFLLVVGQFISGISIVF. Residues 264 to 271 are Extracellular-facing; that stretch reads TQNALSVG. The chain crosses the membrane as a helical span at residues 272-292; it reads LIHALIISILFSALSYMTMII. H274 is a heme b binding site. Over 293–297 the chain is Cytoplasmic; it reads TRPSH.

Belongs to the COX15/CtaA family. Type 1 subfamily. As to quaternary structure, interacts with CtaB. It depends on heme b as a cofactor.

The protein localises to the cell membrane. The catalysed reaction is Fe(II)-heme o + 2 A + H2O = Fe(II)-heme a + 2 AH2. The protein operates within porphyrin-containing compound metabolism; heme A biosynthesis; heme A from heme O: step 1/1. Its function is as follows. Catalyzes the conversion of heme O to heme A by two successive hydroxylations of the methyl group at C8. The first hydroxylation forms heme I, the second hydroxylation results in an unstable dihydroxymethyl group, which spontaneously dehydrates, resulting in the formyl group of heme A. This Alkalihalophilus pseudofirmus (strain ATCC BAA-2126 / JCM 17055 / OF4) (Bacillus pseudofirmus) protein is Heme A synthase.